Consider the following 353-residue polypeptide: Photosystem II protein D1 (353 aa).

T2 is modified (N-acetylthreonine). Position 2 is a phosphothreonine (T2). Transmembrane regions (helical) follow at residues 29-46 (YIGW…TATS), 118-133 (HFLL…EWEL), and 142-156 (WIAV…AATA). H118 contacts chlorophyll a. Y126 contributes to the pheophytin a binding site. [CaMn4O5] cluster is bound by residues D170 and E189. The chain crosses the membrane as a helical span at residues 197–218 (FHMLGVAGVFGGSLFSAMHGSL). Position 198 (H198) interacts with chlorophyll a. A quinone contacts are provided by residues H215 and 264 to 265 (SF). Position 215 (H215) interacts with Fe cation. H272 contributes to the Fe cation binding site. A helical transmembrane segment spans residues 274–288 (FLAAWPVAGIWFTAL). [CaMn4O5] cluster-binding residues include H332, E333, D342, and A344. Residues 345–353 (AVESISIGG) constitute a propeptide that is removed on maturation.

The protein belongs to the reaction center PufL/M/PsbA/D family. As to quaternary structure, PSII is composed of 1 copy each of membrane proteins PsbA, PsbB, PsbC, PsbD, PsbE, PsbF, PsbH, PsbI, PsbJ, PsbK, PsbL, PsbM, PsbT, PsbX, PsbY, PsbZ, Psb30/Ycf12, at least 3 peripheral proteins of the oxygen-evolving complex and a large number of cofactors. It forms dimeric complexes. It depends on The D1/D2 heterodimer binds P680, chlorophylls that are the primary electron donor of PSII, and subsequent electron acceptors. It shares a non-heme iron and each subunit binds pheophytin, quinone, additional chlorophylls, carotenoids and lipids. D1 provides most of the ligands for the Mn4-Ca-O5 cluster of the oxygen-evolving complex (OEC). There is also a Cl(-1) ion associated with D1 and D2, which is required for oxygen evolution. The PSII complex binds additional chlorophylls, carotenoids and specific lipids. as a cofactor. Post-translationally, tyr-161 forms a radical intermediate that is referred to as redox-active TyrZ, YZ or Y-Z. C-terminally processed by CTPA; processing is essential to allow assembly of the oxygen-evolving complex and thus photosynthetic growth.

It is found in the plastid. The protein resides in the chloroplast thylakoid membrane. The enzyme catalyses 2 a plastoquinone + 4 hnu + 2 H2O = 2 a plastoquinol + O2. Photosystem II (PSII) is a light-driven water:plastoquinone oxidoreductase that uses light energy to abstract electrons from H(2)O, generating O(2) and a proton gradient subsequently used for ATP formation. It consists of a core antenna complex that captures photons, and an electron transfer chain that converts photonic excitation into a charge separation. The D1/D2 (PsbA/PsbD) reaction center heterodimer binds P680, the primary electron donor of PSII as well as several subsequent electron acceptors. This is Photosystem II protein D1 from Pinus contorta (Shore pine).